A 523-amino-acid polypeptide reads, in one-letter code: Putative F-box protein At1g30925 (523 aa).

Positions 4-44 (FPNDDLVYEILLRLPAKSVARCSCVSKLRRSILSRQDFTEL) constitute an F-box domain.

This is Putative F-box protein At1g30925 from Arabidopsis thaliana (Mouse-ear cress).